The chain runs to 339 residues: Phosphate acyltransferase (339 aa).

It belongs to the PlsX family. In terms of assembly, homodimer. Probably interacts with PlsY.

It is found in the cytoplasm. The catalysed reaction is a fatty acyl-[ACP] + phosphate = an acyl phosphate + holo-[ACP]. It participates in lipid metabolism; phospholipid metabolism. Functionally, catalyzes the reversible formation of acyl-phosphate (acyl-PO(4)) from acyl-[acyl-carrier-protein] (acyl-ACP). This enzyme utilizes acyl-ACP as fatty acyl donor, but not acyl-CoA. The protein is Phosphate acyltransferase of Aeromonas salmonicida (strain A449).